The primary structure comprises 85 residues: Large ribosomal subunit protein bL27 (85 aa).

Positions 1–22 (MAHKKGQGSSRNGRDSPGQRRG) are disordered.

Belongs to the bacterial ribosomal protein bL27 family.

This is Large ribosomal subunit protein bL27 from Anaeromyxobacter dehalogenans (strain 2CP-1 / ATCC BAA-258).